The chain runs to 319 residues: Pantothenate kinase (319 aa).

96-103 (GSVAVGKS) is an ATP binding site.

This sequence belongs to the prokaryotic pantothenate kinase family.

It localises to the cytoplasm. The catalysed reaction is (R)-pantothenate + ATP = (R)-4'-phosphopantothenate + ADP + H(+). It participates in cofactor biosynthesis; coenzyme A biosynthesis; CoA from (R)-pantothenate: step 1/5. The protein is Pantothenate kinase (coaA) of Bacillus subtilis (strain 168).